The chain runs to 513 residues: Solute carrier family 2, facilitated glucose transporter member 7 (513 aa).

The Cytoplasmic portion of the chain corresponds to 1-21 (MEDKEIGTPLPLPHSEARLQP). Residues 22–42 (TLVLTTLSAAFGSVFQYGYNI) traverse the membrane as a helical segment. Residues 43 to 78 (AVINTPHKVFKSFYNDTHFERHGTFMDESTLLLLWS) are Extracellular-facing. N-linked (GlcNAc...) asparagine glycosylation is present at Asn-57. Residues 79 to 99 (CTVSMFPLGGLLGSLVVGLMV) form a helical membrane-spanning segment. Residues 100–107 (NKWGRKGT) are Cytoplasmic-facing. A helical transmembrane segment spans residues 108–128 (LLINNVFAITSAVLMGVSKVA). The Extracellular portion of the chain corresponds to 129–138 (RAFELIILSR). Residues 139-159 (VLVGICAGIAYSTLPMYLGEL) form a helical membrane-spanning segment. The Cytoplasmic portion of the chain corresponds to 160 to 172 (APQNLRGALGTMT). The chain crosses the membrane as a helical span at residues 173-193 (EVFVIIGVLLAQIFSLQAILG). At 194–198 (NATGW) the chain is on the extracellular side. The helical transmembrane segment at 199–219 (PILLALTGVPAVIQLLSLPFF) threads the bilayer. At 220–282 (PESPRYTLIE…LNLFTFRPLR (63 aa)) the chain is on the cytoplasmic side. The chain crosses the membrane as a helical span at residues 283 to 303 (WQLISIVVLMAGQQLSGINAV). Residues 295-296 (QQ) and Asn-301 each bind D-glucose. Topologically, residues 304–322 (NYYADVIYTSAGVDPTQSQ) are extracellular. A helical membrane pass occupies residues 323-343 (YVTLGSGVINLVMTLVSAVII). Residue Asn-332 participates in D-glucose binding. The Cytoplasmic portion of the chain corresponds to 344-351 (ERLGRRIL). A helical transmembrane segment spans residues 352-372 (LLSGYAICCSACLVLTVALLL). Topologically, residues 373-380 (QSTAPELS) are extracellular. A helical transmembrane segment spans residues 381–401 (YLSIVCVFSYIVGHSIGPSPV). At 402 to 416 (PSVVRTEIVLQSSRT) the chain is on the cytoplasmic side. The helical transmembrane segment at 417–437 (AAFTVDGAVHWLTNFIVGLTF) threads the bilayer. Over 438-446 (PSIQVAIGA) the chain is Extracellular. Residues 447 to 467 (YSFLVFAGVCILTAAYIYVVI) form a helical membrane-spanning segment. Residues 468–513 (PETKGRTFVEINCAFAKRNGVEFPEEKEVATAKPHTPSLPTKETAF) lie on the Cytoplasmic side of the membrane. The tract at residues 494–513 (KEVATAKPHTPSLPTKETAF) is disordered.

It belongs to the major facilitator superfamily. Sugar transporter (TC 2.A.1.1) family. Glucose transporter subfamily.

The protein localises to the cell membrane. Its subcellular location is the apical cell membrane. The enzyme catalyses D-glucose(out) = D-glucose(in). The catalysed reaction is D-fructose(out) = D-fructose(in). In terms of biological role, probable sugar transporter. Even if its physiological substrate is subject to discussion, it is able to transport glucose and fructose. Does not transport galactose, 2-deoxy-d-glucose and xylose. The chain is Solute carrier family 2, facilitated glucose transporter member 7 from Mus musculus (Mouse).